The primary structure comprises 265 residues: Probable aquaporin TIP3-2 (265 aa).

2 consecutive transmembrane segments (helical) span residues 32–52 (LSEFVATAVFVFAAEGSVYGL) and 62–82 (LGGLLVVAVAHALALAAAVAV). The NPA 1 motif lies at 92 to 94 (NPA). The next 3 membrane-spanning stretches (helical) occupy residues 110–130 (AALYWAAQLLGAVLAVLLLRL), 151–171 (ALLLEVVMTFGLVYTVYATAV), and 179–199 (DIAPLAIGLVAGANILAGGPF). Positions 205–207 (NPA) match the NPA 2 motif. The chain crosses the membrane as a helical span at residues 223-243 (WVYWLGPLIGAGMAGALYEFV).

The protein belongs to the MIP/aquaporin (TC 1.A.8) family. TIP (TC 1.A.8.10) subfamily. As to expression, expressed in leaves and at lower levels in roots.

The protein resides in the vacuole membrane. Aquaporins facilitate the transport of water and small neutral solutes across cell membranes. May be involved in transport from the vacuolar compartment to the cytoplasm. The polypeptide is Probable aquaporin TIP3-2 (TIP3-2) (Oryza sativa subsp. japonica (Rice)).